A 400-amino-acid polypeptide reads, in one-letter code: Argininosuccinate synthase (400 aa).

ATP contacts are provided by residues 6 to 14 (AYSGGLDTS) and alanine 33. L-citrulline-binding residues include tyrosine 84 and serine 89. Glycine 114 contributes to the ATP binding site. 3 residues coordinate L-aspartate: threonine 116, asparagine 120, and aspartate 121. Residue asparagine 120 participates in L-citrulline binding. 5 residues coordinate L-citrulline: arginine 124, serine 173, serine 182, glutamate 258, and tyrosine 270.

It belongs to the argininosuccinate synthase family. Type 1 subfamily. Homotetramer.

It is found in the cytoplasm. The enzyme catalyses L-citrulline + L-aspartate + ATP = 2-(N(omega)-L-arginino)succinate + AMP + diphosphate + H(+). Its pathway is amino-acid biosynthesis; L-arginine biosynthesis; L-arginine from L-ornithine and carbamoyl phosphate: step 2/3. This Thermus thermophilus (strain ATCC BAA-163 / DSM 7039 / HB27) protein is Argininosuccinate synthase.